A 530-amino-acid chain; its full sequence is Autoinducer-2 kinase (530 aa).

The protein belongs to the FGGY kinase family.

The protein localises to the cytoplasm. It carries out the reaction (S)-4,5-dihydroxypentane-2,3-dione + ATP = (2S)-2-hydroxy-3,4-dioxopentyl phosphate + ADP + H(+). In terms of biological role, catalyzes the phosphorylation of autoinducer-2 (AI-2) to phospho-AI-2, which subsequently inactivates the transcriptional regulator LsrR and leads to the transcription of the lsr operon. Phosphorylates the ring-open form of (S)-4,5-dihydroxypentane-2,3-dione (DPD), which is the precursor to all AI-2 signaling molecules, at the C5 position. The sequence is that of Autoinducer-2 kinase from Salmonella choleraesuis (strain SC-B67).